The primary structure comprises 109 residues: Probable gas vesicle protein J1 (109 aa).

It belongs to the gas vesicle GvpA family. In terms of assembly, interacts with GvpA.

It is found in the gas vesicle. A minor component of the gas vesicle, might be involved in nucleating gas vesicle formation. Gas vesicles (GV) are hollow, gas filled proteinaceous nanostructures. It is not clear what function GVs perform in soil bacteria. This chain is Probable gas vesicle protein J1 (gvpJ1), found in Streptomyces coelicolor (strain ATCC BAA-471 / A3(2) / M145).